The primary structure comprises 399 residues: Probable dual-specificity RNA methyltransferase RlmN (399 aa).

Glu97 (proton acceptor) is an active-site residue. Residues 103-381 enclose the Radical SAM core domain; sequence YPDRATVCVS…CTVRVERGVS (279 aa). Residues Cys110 and Cys386 are joined by a disulfide bond. 3 residues coordinate [4Fe-4S] cluster: Cys117, Cys121, and Cys124. Residues 203-204, Ser235, 258-260, and Asn343 contribute to the S-adenosyl-L-methionine site; these read GE and SLH. The active-site S-methylcysteine intermediate is Cys386.

This sequence belongs to the radical SAM superfamily. RlmN family. [4Fe-4S] cluster serves as cofactor.

The protein resides in the cytoplasm. The catalysed reaction is adenosine(2503) in 23S rRNA + 2 reduced [2Fe-2S]-[ferredoxin] + 2 S-adenosyl-L-methionine = 2-methyladenosine(2503) in 23S rRNA + 5'-deoxyadenosine + L-methionine + 2 oxidized [2Fe-2S]-[ferredoxin] + S-adenosyl-L-homocysteine. The enzyme catalyses adenosine(37) in tRNA + 2 reduced [2Fe-2S]-[ferredoxin] + 2 S-adenosyl-L-methionine = 2-methyladenosine(37) in tRNA + 5'-deoxyadenosine + L-methionine + 2 oxidized [2Fe-2S]-[ferredoxin] + S-adenosyl-L-homocysteine. Its function is as follows. Specifically methylates position 2 of adenine 2503 in 23S rRNA and position 2 of adenine 37 in tRNAs. This is Probable dual-specificity RNA methyltransferase RlmN from Roseiflexus sp. (strain RS-1).